Reading from the N-terminus, the 136-residue chain is ATP synthase epsilon chain (136 aa).

Belongs to the ATPase epsilon chain family. As to quaternary structure, F-type ATPases have 2 components, CF(1) - the catalytic core - and CF(0) - the membrane proton channel. CF(1) has five subunits: alpha(3), beta(3), gamma(1), delta(1), epsilon(1). CF(0) has three main subunits: a, b and c.

It is found in the cell membrane. Produces ATP from ADP in the presence of a proton gradient across the membrane. The polypeptide is ATP synthase epsilon chain (Herpetosiphon aurantiacus (strain ATCC 23779 / DSM 785 / 114-95)).